The primary structure comprises 386 residues: Succinate--CoA ligase [ADP-forming] subunit beta (386 aa).

One can recognise an ATP-grasp domain in the interval 9-244 (KAVLRSYGVS…LDEEDSKEIE (236 aa)). ATP contacts are provided by residues K46, 53–55 (GRG), E99, C102, and E107. Positions 199 and 213 each coordinate Mg(2+). Substrate contacts are provided by residues N264 and 321 to 323 (GIM).

This sequence belongs to the succinate/malate CoA ligase beta subunit family. As to quaternary structure, heterotetramer of two alpha and two beta subunits. It depends on Mg(2+) as a cofactor.

The enzyme catalyses succinate + ATP + CoA = succinyl-CoA + ADP + phosphate. The catalysed reaction is GTP + succinate + CoA = succinyl-CoA + GDP + phosphate. It functions in the pathway carbohydrate metabolism; tricarboxylic acid cycle; succinate from succinyl-CoA (ligase route): step 1/1. In terms of biological role, succinyl-CoA synthetase functions in the citric acid cycle (TCA), coupling the hydrolysis of succinyl-CoA to the synthesis of either ATP or GTP and thus represents the only step of substrate-level phosphorylation in the TCA. The beta subunit provides nucleotide specificity of the enzyme and binds the substrate succinate, while the binding sites for coenzyme A and phosphate are found in the alpha subunit. The chain is Succinate--CoA ligase [ADP-forming] subunit beta from Bacillus cereus (strain ATCC 14579 / DSM 31 / CCUG 7414 / JCM 2152 / NBRC 15305 / NCIMB 9373 / NCTC 2599 / NRRL B-3711).